The following is a 142-amino-acid chain: Lysozyme 2 (142 aa).

Positions 1 to 20 are cleaved as a signal peptide; it reads MLKLTLTILAAVLLVTPAFG. Residues 21 to 142 form the C-type lysozyme domain; the sequence is KVYTRCSLAR…HTLPSIDDCF (122 aa). 4 cysteine pairs are disulfide-bonded: cysteine 26-cysteine 141, cysteine 47-cysteine 131, cysteine 82-cysteine 98, and cysteine 94-cysteine 112. The active site involves glutamate 52. Residue asparagine 66 is glycosylated (N-linked (GlcNAc...) asparagine). Aspartate 70 is a catalytic residue.

Belongs to the glycosyl hydrolase 22 family. In terms of tissue distribution, expressed only in the midgut where it is concentrated around the middle in all larval stages.

It localises to the secreted. The enzyme catalyses Hydrolysis of (1-&gt;4)-beta-linkages between N-acetylmuramic acid and N-acetyl-D-glucosamine residues in a peptidoglycan and between N-acetyl-D-glucosamine residues in chitodextrins.. In terms of biological role, lysozymes have primarily a bacteriolytic function. Shows antibacterial activity against Gram-positive bacterium M.luteus but shows no activity against Gram-negative bacterium E.coli. Likely to play a role in the eradication of ingested pathogens during their passage through the intestine. This Lucilia sericata (Green bottle fly) protein is Lysozyme 2.